The primary structure comprises 293 residues: Homoserine kinase (293 aa).

Residue 80-90 (RPASGLGSSAA) coordinates ATP.

It belongs to the GHMP kinase family. Homoserine kinase subfamily.

It is found in the cytoplasm. It catalyses the reaction L-homoserine + ATP = O-phospho-L-homoserine + ADP + H(+). It participates in amino-acid biosynthesis; L-threonine biosynthesis; L-threonine from L-aspartate: step 4/5. Its function is as follows. Catalyzes the ATP-dependent phosphorylation of L-homoserine to L-homoserine phosphate. The chain is Homoserine kinase from Halorubrum lacusprofundi (strain ATCC 49239 / DSM 5036 / JCM 8891 / ACAM 34).